The following is a 215-amino-acid chain: MLNLVVNREIAFSLLPLLHQFDRKLLEQFFADGLRLIHYDVMDHFVDNTVFQGEHLDELQQIGFQVNVHLMVQALEQILPVYLHHQAVKRISFHVEPFDIPTIKHFIAQIKQAGKQVGLAFKFTTPLVNYERLVQQLDFVTLMSVPPGKGGQAFNSAVFNNLKQAHKYHCSIEIDGGIKLDNIHQIQDDVNFIVMGSGFIKLERWQRQQLLKTNQ.

Position 13 (S13) interacts with substrate. A divalent metal cation is bound by residues H38, D40, H69, and D175. D40 functions as the Proton acceptor in the catalytic mechanism. Substrate-binding positions include H69, 175–177 (DGG), and 196–197 (GS). D175 (proton donor) is an active-site residue.

The protein belongs to the ribulose-phosphate 3-epimerase family. It depends on a divalent metal cation as a cofactor.

It carries out the reaction D-ribulose 5-phosphate = D-xylulose 5-phosphate. It participates in carbohydrate degradation. In terms of biological role, catalyzes the reversible epimerization of D-ribulose 5-phosphate to D-xylulose 5-phosphate. This Mycoplasma pneumoniae (strain ATCC 29342 / M129 / Subtype 1) (Mycoplasmoides pneumoniae) protein is Ribulose-phosphate 3-epimerase.